Consider the following 483-residue polypeptide: ATP synthase subunit beta (483 aa).

167–174 (GGAGVGKT) is an ATP binding site.

The protein belongs to the ATPase alpha/beta chains family. As to quaternary structure, F-type ATPases have 2 components, CF(1) - the catalytic core - and CF(0) - the membrane proton channel. CF(1) has five subunits: alpha(3), beta(3), gamma(1), delta(1), epsilon(1). CF(0) has three main subunits: a(1), b(2) and c(9-12). The alpha and beta chains form an alternating ring which encloses part of the gamma chain. CF(1) is attached to CF(0) by a central stalk formed by the gamma and epsilon chains, while a peripheral stalk is formed by the delta and b chains.

Its subcellular location is the cell membrane. It catalyses the reaction ATP + H2O + 4 H(+)(in) = ADP + phosphate + 5 H(+)(out). Functionally, produces ATP from ADP in the presence of a proton gradient across the membrane. The catalytic sites are hosted primarily by the beta subunits. This chain is ATP synthase subunit beta, found in Paenarthrobacter aurescens (strain TC1).